Consider the following 225-residue polypeptide: uncharacterized protein (225 aa).

Positions 1-48 (MTQLVTRARSARGSTLGEQPRQDQLDFADHTGTAGDGNDGAAAASGPV) are disordered. Residues 20–29 (PRQDQLDFAD) are compositionally biased toward basic and acidic residues. Residues 64 to 136 (GYRGPSACQI…LHNIRVAVDH (73 aa)) enclose the HTH merR-type domain. Residues 201 to 225 (DGGESIAAPEDELASRRKHRDRKIG) are disordered. The segment covering 216 to 225 (RRKHRDRKIG) has biased composition (basic residues).

This is an uncharacterized protein from Mycobacterium tuberculosis (strain CDC 1551 / Oshkosh).